Reading from the N-terminus, the 1088-residue chain is Platelet-derived growth factor receptor alpha (1088 aa).

The first 23 residues, 1–23 (MGTSQAFLVLSCLLTGPSLIVCQ), serve as a signal peptide directing secretion. Ig-like C2-type domains follow at residues 24–112 (LLLP…SEIE), 116–200 (IYIY…FKTS), 201–305 (EFNV…KTVT), 318–409 (PTFG…FELS), and 413–516 (PASI…LKLV). Topologically, residues 24 to 527 (LLLPSILPNE…PSLRSELTVA (504 aa)) are extracellular. A disulfide bridge links cysteine 48 with cysteine 99. Asparagine 75, asparagine 102, and asparagine 178 each carry an N-linked (GlcNAc...) asparagine glycan. Disulfide bonds link cysteine 149–cysteine 188 and cysteine 234–cysteine 289. N-linked (GlcNAc...) asparagine glycans are attached at residues asparagine 352, asparagine 358, asparagine 457, and asparagine 467. Cysteines 434 and 500 form a disulfide. The chain crosses the membrane as a helical span at residues 528-548 (AAVLVLLVIVIVSLIVLVVIW). Topologically, residues 549 to 1088 (KQKPRYEIRW…SSDLVEDSFL (540 aa)) are cytoplasmic. Residues tyrosine 571 and tyrosine 573 each carry the phosphotyrosine; by autocatalysis modification. Residues 592 to 953 (LVLGRILGSG…HLSEIVENLL (362 aa)) enclose the Protein kinase domain. Residues 598–606 (LGSGAFGKV) and lysine 626 each bind ATP. Tyrosine 719, tyrosine 730, tyrosine 741, tyrosine 753, tyrosine 761, and tyrosine 767 each carry phosphotyrosine; by autocatalysis. Aspartate 817 (proton acceptor) is an active-site residue. Residues tyrosine 848, tyrosine 987, and tyrosine 1017 each carry the phosphotyrosine; by autocatalysis modification. A disordered region spans residues 1017–1088 (YIIPLPDIDP…SSDLVEDSFL (72 aa)). Residues 1040–1058 (SSQTSEESAIETGSSSSTF) show a composition bias toward polar residues. Over residues 1064 to 1088 (ETIEDIDMMDDIGIDSSDLVEDSFL) the composition is skewed to acidic residues.

It belongs to the protein kinase superfamily. Tyr protein kinase family. CSF-1/PDGF receptor subfamily. As to quaternary structure, interacts with homodimeric PDGFA, PDGFB and PDGFC, and with heterodimers formed by PDGFA and PDGFB. Monomer in the absence of bound ligand. Interaction with dimeric PDGFA, PDGFB and/or PDGFC leads to receptor dimerization, where both PDGFRA homodimers and heterodimers with PDGFRB are observed. Interacts (tyrosine phosphorylated) with SHB (via SH2 domain). Interacts (tyrosine phosphorylated) with SHF (via SH2 domain). Interacts (tyrosine phosphorylated) with SRC (via SH2 domain). Interacts (tyrosine phosphorylated) with PIK3R1. Interacts (tyrosine phosphorylated) with PLCG1 (via SH2 domain). Interacts (tyrosine phosphorylated) with CRK, GRB2 and GRB7. Interacts with CD248; this interaction promotes PDGF receptor signaling pathway. In terms of processing, ubiquitinated, leading to its internalization and degradation. Post-translationally, autophosphorylated on tyrosine residues upon ligand binding. Autophosphorylation occurs in trans, i.e. one subunit of the dimeric receptor phosphorylates tyrosine residues on the other subunit. Phosphorylation at Tyr-730 and Tyr-741 is important for interaction with PIK3R1. Phosphorylation at Tyr-719 and Tyr-753 is important for interaction with PTPN11. Phosphorylation at Tyr-761 is important for interaction with CRK. Phosphorylation at Tyr-571 and Tyr-573 is important for interaction with SRC and SRC family members. Phosphorylation at Tyr-987 and Tyr-1017 is important for interaction with PLCG1.

Its subcellular location is the cell membrane. It is found in the cell projection. The protein localises to the cilium. It localises to the golgi apparatus. The enzyme catalyses L-tyrosyl-[protein] + ATP = O-phospho-L-tyrosyl-[protein] + ADP + H(+). With respect to regulation, present in an inactive conformation in the absence of bound ligand. Binding of PDGFA and/or PDGFB leads to dimerization and activation by autophosphorylation on tyrosine residues. Inhibited by imatinib, nilotinib and sorafenib. Functionally, tyrosine-protein kinase that acts as a cell-surface receptor for PDGFA, PDGFB and PDGFC and plays an essential role in the regulation of embryonic development, cell proliferation, survival and chemotaxis. Depending on the context, promotes or inhibits cell proliferation and cell migration. Plays an important role in the differentiation of bone marrow-derived mesenchymal stem cells. Required for normal skeleton development and cephalic closure during embryonic development. Required for normal development of the mucosa lining the gastrointestinal tract, and for recruitment of mesenchymal cells and normal development of intestinal villi. Plays a role in cell migration and chemotaxis in wound healing. Plays a role in platelet activation, secretion of agonists from platelet granules, and in thrombin-induced platelet aggregation. Binding of its cognate ligands - homodimeric PDGFA, homodimeric PDGFB, heterodimers formed by PDGFA and PDGFB or homodimeric PDGFC -leads to the activation of several signaling cascades; the response depends on the nature of the bound ligand and is modulated by the formation of heterodimers between PDGFRA and PDGFRB. Phosphorylates PIK3R1, PLCG1, and PTPN11. Activation of PLCG1 leads to the production of the cellular signaling molecules diacylglycerol and inositol 1,4,5-trisphosphate, mobilization of cytosolic Ca(2+) and the activation of protein kinase C. Phosphorylates PIK3R1, the regulatory subunit of phosphatidylinositol 3-kinase, and thereby mediates activation of the AKT1 signaling pathway. Mediates activation of HRAS and of the MAP kinases MAPK1/ERK2 and/or MAPK3/ERK1. Promotes activation of STAT family members STAT1, STAT3 and STAT5A and/or STAT5B. Receptor signaling is down-regulated by protein phosphatases that dephosphorylate the receptor and its down-stream effectors, and by rapid internalization of the activated receptor. This Rattus norvegicus (Rat) protein is Platelet-derived growth factor receptor alpha (Pdgfra).